Consider the following 221-residue polypeptide: Proteasome subunit beta type-1 (221 aa).

This sequence belongs to the peptidase T1B family. The 26S proteasome consists of a 20S proteasome core and two 19S regulatory subunits. The 20S proteasome core is composed of 28 subunits that are arranged in four stacked rings, resulting in a barrel-shaped structure. The two end rings are each formed by seven alpha subunits, and the two central rings are each formed by seven beta subunits. The catalytic chamber with the active sites is on the inside of the barrel.

It localises to the cytoplasm. The protein resides in the nucleus. In terms of biological role, non-catalytic component of the proteasome, a multicatalytic proteinase complex which is characterized by its ability to cleave peptides with Arg, Phe, Tyr, Leu, and Glu adjacent to the leaving group at neutral or slightly basic pH. The proteasome has an ATP-dependent proteolytic activity. This is Proteasome subunit beta type-1 (PBF1) from Oryza sativa subsp. japonica (Rice).